A 123-amino-acid polypeptide reads, in one-letter code: uncharacterized protein (123 aa).

Helical transmembrane passes span 1–21 and 103–123; these read MVLPLMFMYCKLAMLSLAVGC and LESSFFMTISLYMNISYILLF.

Its subcellular location is the membrane. This is an uncharacterized protein from Saccharomyces cerevisiae (strain ATCC 204508 / S288c) (Baker's yeast).